We begin with the raw amino-acid sequence, 163 residues long: Phosphopantetheine adenylyltransferase (163 aa).

Serine 9 lines the substrate pocket. Residues 9-10 and histidine 17 contribute to the ATP site; that span reads SF. Substrate contacts are provided by lysine 41, leucine 73, and lysine 87. Residues 88 to 90, glutamate 98, and 124 to 130 contribute to the ATP site; these read GLR and YTYVSST.

This sequence belongs to the bacterial CoaD family. As to quaternary structure, homohexamer. Requires Mg(2+) as cofactor.

The protein localises to the cytoplasm. The catalysed reaction is (R)-4'-phosphopantetheine + ATP + H(+) = 3'-dephospho-CoA + diphosphate. The protein operates within cofactor biosynthesis; coenzyme A biosynthesis; CoA from (R)-pantothenate: step 4/5. Functionally, reversibly transfers an adenylyl group from ATP to 4'-phosphopantetheine, yielding dephospho-CoA (dPCoA) and pyrophosphate. The sequence is that of Phosphopantetheine adenylyltransferase from Fusobacterium nucleatum subsp. nucleatum (strain ATCC 25586 / DSM 15643 / BCRC 10681 / CIP 101130 / JCM 8532 / KCTC 2640 / LMG 13131 / VPI 4355).